The primary structure comprises 155 residues: Small ribosomal subunit protein uS7 (155 aa).

The protein belongs to the universal ribosomal protein uS7 family. Part of the 30S ribosomal subunit. Contacts proteins S9 and S11.

In terms of biological role, one of the primary rRNA binding proteins, it binds directly to 16S rRNA where it nucleates assembly of the head domain of the 30S subunit. Is located at the subunit interface close to the decoding center, probably blocks exit of the E-site tRNA. This Mycoplasma mycoides subsp. mycoides SC (strain CCUG 32753 / NCTC 10114 / PG1) protein is Small ribosomal subunit protein uS7.